Here is a 908-residue protein sequence, read N- to C-terminus: Glutamate receptor ionotropic, kainate 2 (908 aa).

Residues 1–31 form the signal peptide; sequence MKIIFPILSNPVFRRTVKLLLCLLWIGYSQG. The Extracellular portion of the chain corresponds to 32-561; sequence TTHVLRFGGI…VFSFLNPLSP (530 aa). 7 N-linked (GlcNAc...) asparagine glycosylation sites follow: Asn67, Asn73, Asn275, Asn378, Asn412, Asn423, and Asn430. Cys96 and Cys347 are joined by a disulfide. Positions 516, 518, and 523 each coordinate L-glutamate. An N-linked (GlcNAc...) asparagine glycan is attached at Asn546. The chain crosses the membrane as a helical span at residues 562–582; that stretch reads DIWMYVLLACLGVSCVLFVIA. Over 583 to 638 the chain is Cytoplasmic; the sequence is RFSPYEWYNPHPCNPDSDVVENNFTLLNSFWFGVGALMRQGSELMPKALSTRIVGG. Residues 639 to 659 form a helical membrane-spanning segment; that stretch reads IWWFFTLIIISSYTANLAAFL. The Extracellular portion of the chain corresponds to 660–819; the sequence is TVERMESPID…KEASALGVQN (160 aa). 3 residues coordinate L-glutamate: Ala689, Thr690, and Glu738. The cysteines at positions 750 and 804 are disulfide-linked. The N-linked (GlcNAc...) asparagine glycan is linked to Asn751. Residues 820-840 form a helical membrane-spanning segment; it reads IGGIFIVLAAGLVLSVFVAVG. The Cytoplasmic portion of the chain corresponds to 841–908; it reads EFLYKSKKNA…RRLPGKETMA (68 aa). A phosphoserine; by PKC mark is found at Ser846 and Ser868. Lys886 is covalently cross-linked (Glycyl lysine isopeptide (Lys-Gly) (interchain with G-Cter in SUMO1)).

It belongs to the glutamate-gated ion channel (TC 1.A.10.1) family. GRIK2 subfamily. In terms of assembly, homotetramer and heterotetramer with GRIK5. Tetramers may be formed by the dimerization of dimers. Assembles into a kainate-gated homomeric channel that does not bind AMPA. Can form functional heteromeric receptors with GRIK3, GRIK4 and GRIK5. Interacts with NETO2. Interacts with DLG4. Interacts with NETO2. Interacts (via C-terminus) with KLHL17 (via kelch repeats); the interaction targets GRIK2 for degradation via ubiquitin-proteasome pathway. Post-translationally, sumoylation mediates kainate receptor-mediated endocytosis and regulates synaptic transmission. Sumoylation is enhanced by PIAS3 and desumoylated by SENP1. Ubiquitinated. Ubiquitination regulates the GRIK2 levels at the synapse by leading kainate receptor degradation through proteasome. In terms of processing, phosphorylated by PKC at Ser-868 upon agonist activation, this directly enhance sumoylation.

The protein localises to the cell membrane. The protein resides in the postsynaptic cell membrane. It carries out the reaction Ca(2+)(in) = Ca(2+)(out). The catalysed reaction is Na(+)(in) = Na(+)(out). With respect to regulation, cold receptor activity activated by temperatures between 10-19 degrees Celsius. Its function is as follows. Ionotropic glutamate receptor that functions as a cation-permeable ligand-gated ion channel, gated by L-glutamate and the glutamatergic agonist kainic acid. L-glutamate acts as an excitatory neurotransmitter at many synapses in the central nervous system. Binding of the excitatory neurotransmitter L-glutamate induces a conformation change, leading to the opening of the cation channel, and thereby converts the chemical signal to an electrical impulse. The receptor then desensitizes rapidly and enters a transient inactive state, characterized by the presence of bound agonist. Modulates cell surface expression of NETO2. In association with GRIK3, involved in presynaptic facilitation of glutamate release at hippocampal mossy fiber synapses. Functionally, independent of its ionotropic glutamate receptor activity, acts as a thermoreceptor conferring sensitivity to cold temperatures. Functions in dorsal root ganglion neurons. The chain is Glutamate receptor ionotropic, kainate 2 (GRIK2) from Macaca fascicularis (Crab-eating macaque).